Consider the following 503-residue polypeptide: D-alanine--D-alanyl carrier protein ligase (503 aa).

151–152 (TS) contributes to the ATP binding site. D-alanine is bound at residue D196. Residue 291–296 (NTYGPT) participates in ATP binding. V300 lines the D-alanine pocket. ATP-binding positions include D382, 393 to 396 (YNGR), and K491. K491 contacts D-alanine.

Belongs to the ATP-dependent AMP-binding enzyme family. DltA subfamily.

The protein resides in the cytoplasm. The catalysed reaction is holo-[D-alanyl-carrier protein] + D-alanine + ATP = D-alanyl-[D-alanyl-carrier protein] + AMP + diphosphate. It participates in cell wall biogenesis; lipoteichoic acid biosynthesis. Its function is as follows. Catalyzes the first step in the D-alanylation of lipoteichoic acid (LTA), the activation of D-alanine and its transfer onto the D-alanyl carrier protein (Dcp) DltC. In an ATP-dependent two-step reaction, forms a high energy D-alanyl-AMP intermediate, followed by transfer of the D-alanyl residue as a thiol ester to the phosphopantheinyl prosthetic group of the Dcp. D-alanylation of LTA plays an important role in modulating the properties of the cell wall in Gram-positive bacteria, influencing the net charge of the cell wall. This is D-alanine--D-alanyl carrier protein ligase from Bacillus anthracis (strain A0248).